The sequence spans 503 residues: Nondiscriminating glutamyl-tRNA synthetase EARS2, mitochondrial (503 aa).

A mitochondrion-targeting transit peptide spans 1 to 22 (MKILRGVSRQMCTSRPEVRVRF). 21-23 (RFA) is an L-glutamate binding site. The short motif at 26–34 (PTGFLHLGG) is the 'HIGH' region element. Histidine 31 contacts ATP. Residues glutamate 57, 209–213 (YHLAS), and arginine 227 contribute to the L-glutamate site. ATP-binding positions include glutamate 230 and 265–269 (KLSKR). Positions 265-269 (KLSKR) match the 'KMSKS' region motif.

This sequence belongs to the class-I aminoacyl-tRNA synthetase family. Glutamate--tRNA ligase type 1 subfamily.

The protein localises to the mitochondrion matrix. The enzyme catalyses tRNA(Glx) + L-glutamate + ATP = L-glutamyl-tRNA(Glx) + AMP + diphosphate. It carries out the reaction tRNA(Glu) + L-glutamate + ATP = L-glutamyl-tRNA(Glu) + AMP + diphosphate. The catalysed reaction is tRNA(Gln) + L-glutamate + ATP = L-glutamyl-tRNA(Gln) + AMP + diphosphate. Non-discriminating glutamyl-tRNA synthetase that catalyzes aminoacylation of both mitochondrial tRNA(Glu) and tRNA(Gln) and participates in RNA aminoacylation for mitochondrial protein translation. Attachs glutamate to tRNA(Glu) or tRNA(Gln) in a two-step reaction: glutamate is first activated by ATP to form Glu-AMP and then transferred to the acceptor end of tRNA(Glu) or tRNA(Gln). In Danio rerio (Zebrafish), this protein is Nondiscriminating glutamyl-tRNA synthetase EARS2, mitochondrial.